A 369-amino-acid chain; its full sequence is Cyclic AMP receptor-like protein A (369 aa).

The Extracellular portion of the chain corresponds to 1-4 (MIQI). A helical membrane pass occupies residues 5–22 (LLSTFISFIIIIVSSNDI). Topologically, residues 23–72 (RSGENDNFNNNKMINNFLTTITTNDTIIIKETESPNDYDFSKEQIESLDK) are cytoplasmic. A helical transmembrane segment spans residues 73–93 (IVYFSSTMGIVGALFIIVSFF). Residues 94 to 100 (LFKAART) are Extracellular-facing. Residues 101–121 (FATKMIFFLSLSDLFAAIFYL) form a helical membrane-spanning segment. Topologically, residues 122 to 146 (PYYRDSDIMCNLQGMGLVFFLSSSY) are cytoplasmic. A helical transmembrane segment spans residues 147–167 (LWTMCISISLFMVFFTTIFEL). Over 168–173 (NHWFKY) the chain is Extracellular. The chain crosses the membrane as a helical span at residues 174-194 (FHFICWGIPLFTAIISLIFHA). The Cytoplasmic segment spans residues 195 to 212 (YGKTGSWCFISDPTSIFR). Residues 213–233 (LLYYLPLIVVFFINLVVFIAI) traverse the membrane as a helical segment. Topologically, residues 234-247 (RWKISQHSNSLVSR) are extracellular. The helical transmembrane segment at 248–268 (VNIIVSFYLIAFSLSQLPTII) threads the bilayer. The Cytoplasmic segment spans residues 269–369 (NSIQNFSDPD…KLIIDDYNRV (101 aa)).

Belongs to the G-protein coupled receptor 5 family.

It is found in the membrane. In terms of biological role, receptor for cAMP which may play a role in prestalk cell differentiation. May act as a negative regulator of cell growth. This Dictyostelium discoideum (Social amoeba) protein is Cyclic AMP receptor-like protein A (crlA).